The chain runs to 442 residues: Protein PhoH2 (442 aa).

Residues 3–135 (KIYVLDTNVL…LVSKDVLVRV (133 aa)) enclose the PINc domain. An ATP-binding site is contributed by 259–266 (GKAGTGKT).

This sequence in the N-terminal section; belongs to the PINc/VapC protein family. The protein in the C-terminal section; belongs to the PhoH family.

It catalyses the reaction n ATP + n H2O + wound RNA = n ADP + n phosphate + unwound RNA.. It carries out the reaction ATP + H2O = ADP + phosphate + H(+). The enzyme catalyses GTP + H2O = GDP + phosphate + H(+). Unwinds and/or cleaves 5'-tailed RNA in vitro. Has ATPase and GTPase activities. Unlike the protein in mycobacteria there does not seem to be an antitoxin gene upstream, suggesting this is not a toxin-antitoxin system. The sequence is that of Protein PhoH2 from Bacillus subtilis (strain 168).